Here is a 1230-residue protein sequence, read N- to C-terminus: Serine/threonine-protein kinase CST20 (1230 aa).

Polar residues predominate over residues 1 to 20 (MSILSENNPTPTSITDPNKS). Disordered stretches follow at residues 1–384 (MSIL…TAHN) and 413–470 (SSLE…HSQE). Low complexity-rich tracts occupy residues 57–70 (NTTSANTSSLSLGS) and 96–125 (SGSGDIDDSQQSHNNNNNNNNNNNESNPES). Over residues 150 to 161 (HQGDDSDNEKQY) the composition is skewed to basic and acidic residues. Composition is skewed to polar residues over residues 175-197 (DSYSPGTLESPGTLNALETNNVS), 207-224 (TSSLEDLSLSLQHQNENA), and 237-246 (PTSKTSSFHD). A compositionally biased stretch (low complexity) spans 248–257 (SSVISSSTSV). Polar residues-rich tracts occupy residues 262-277 (SNPTSTRGSHLSSYKS) and 311-330 (DTLSSATNSPNLLRNDTLQG). 2 stretches are compositionally biased toward low complexity: residues 349 to 381 (NTSATSRNTSGTSTSTVVKNSRSGTSKSTSTST) and 439 to 468 (KVRGVFSSMFGKNKSTSSSSSSNSGSNSHS). One can recognise a CRIB domain in the interval 475 to 488 (ISTPFNAKHLAHVG). Disordered stretches follow at residues 545-831 (FHFD…ALAD) and 867-919 (LREK…KQAA). A compositionally biased stretch (polar residues) spans 550–561 (NKSSSSGWSNEN). The segment covering 570–581 (SNSGSGSGGGGA) has biased composition (gly residues). A compositionally biased stretch (polar residues) spans 604–613 (ITPSQSMPTK). Basic and acidic residues predominate over residues 614–628 (TESKQSENQHPHEDN). Over residues 629-642 (ATQYTPRTPTSHVQ) the composition is skewed to polar residues. 3 stretches are compositionally biased toward low complexity: residues 670–683 (PSSQSLPRSDSQSD), 696–710 (SPSKIKIRSISSKSL), and 736–749 (SIPKSKSHSASLSS). Residues 750–761 (QLRPATNGSTTA) show a composition bias toward polar residues. Residues 789–807 (APPPPPSAPPAPPVPPAPP) are compositionally biased toward pro residues. Residues 811–826 (LSEQTSEIPQQRTAPS) are compositionally biased toward polar residues. The segment covering 867–876 (LREKNERQNR) has biased composition (basic and acidic residues). Residues 877–892 (QQETGQNNADTASGGS) show a composition bias toward polar residues. In terms of domain architecture, Protein kinase spans 953 to 1205 (YVDLVKIGQG…ADELLHDNFI (253 aa)). ATP contacts are provided by residues 959–967 (IGQGASGGV) and K983. Catalysis depends on D1073, which acts as the Proton acceptor.

Belongs to the protein kinase superfamily. STE Ser/Thr protein kinase family. STE20 subfamily.

It is found in the cytoplasm. Its subcellular location is the nucleus. It carries out the reaction L-seryl-[protein] + ATP = O-phospho-L-seryl-[protein] + ADP + H(+). The catalysed reaction is L-threonyl-[protein] + ATP = O-phospho-L-threonyl-[protein] + ADP + H(+). Its function is as follows. MAP4K component of the MAPK pathway required for the mating pheromone response, and the regulation of cell polarity and cell cycle. Phosphorylates histone H2B to form H2BS10ph. Required for hyphal formation and virulence. This Candida albicans (Yeast) protein is Serine/threonine-protein kinase CST20 (CST20).